A 443-amino-acid chain; its full sequence is Tubulin beta-3 chain (443 aa).

GTP is bound by residues Q11, E69, S138, G142, T143, G144, N204, and N226. Mg(2+) is bound at residue E69.

The protein belongs to the tubulin family. As to quaternary structure, dimer of alpha and beta chains. A typical microtubule is a hollow water-filled tube with an outer diameter of 25 nm and an inner diameter of 15 nM. Alpha-beta heterodimers associate head-to-tail to form protofilaments running lengthwise along the microtubule wall with the beta-tubulin subunit facing the microtubule plus end conferring a structural polarity. Microtubules usually have 13 protofilaments but different protofilament numbers can be found in some organisms and specialized cells. It depends on Mg(2+) as a cofactor.

The protein resides in the cytoplasm. Its subcellular location is the cytoskeleton. Functionally, tubulin is the major constituent of microtubules, a cylinder consisting of laterally associated linear protofilaments composed of alpha- and beta-tubulin heterodimers. Microtubules grow by the addition of GTP-tubulin dimers to the microtubule end, where a stabilizing cap forms. Below the cap, tubulin dimers are in GDP-bound state, owing to GTPase activity of alpha-tubulin. The chain is Tubulin beta-3 chain (TUB-3) from Echinococcus multilocularis (Fox tapeworm).